The following is an 891-amino-acid chain: Alanine--tRNA ligase (891 aa).

H564, H568, C677, and H681 together coordinate Zn(2+).

The protein belongs to the class-II aminoacyl-tRNA synthetase family. The cofactor is Zn(2+).

It is found in the cytoplasm. The enzyme catalyses tRNA(Ala) + L-alanine + ATP = L-alanyl-tRNA(Ala) + AMP + diphosphate. Catalyzes the attachment of alanine to tRNA(Ala) in a two-step reaction: alanine is first activated by ATP to form Ala-AMP and then transferred to the acceptor end of tRNA(Ala). Also edits incorrectly charged Ser-tRNA(Ala) and Gly-tRNA(Ala) via its editing domain. This Rhodopseudomonas palustris (strain BisA53) protein is Alanine--tRNA ligase.